Consider the following 884-residue polypeptide: Kinesin-like protein KIN-7C (884 aa).

A Kinesin motor domain is found at 33-355 (RIQVLVRLRP…LLFGSCAKEV (323 aa)). ATP is bound at residue 119–126 (GQTSSGKT). Residues 364–435 (VMSDKALVKH…LQDLLQSVGD (72 aa)) adopt a coiled-coil conformation. A disordered region spans residues 434-530 (GDHDLNRQVQ…VNSRHSRPSG (97 aa)). Residues 449 to 460 (RSPPSVGMPPSV) show a composition bias toward low complexity. Positions 461–483 (SRDDSSQVSHDDSDLYKEVRCIE) are enriched in basic and acidic residues. The span at 498–523 (GESSSPQDSNMNSGLHGNDSNASVNS) shows a compositional bias: polar residues.

Belongs to the TRAFAC class myosin-kinesin ATPase superfamily. Kinesin family. KIN-7 subfamily.

The polypeptide is Kinesin-like protein KIN-7C (Oryza sativa subsp. japonica (Rice)).